A 393-amino-acid polypeptide reads, in one-letter code: Phosphoglycerate kinase (393 aa).

Residues 22–24 (DFN), arginine 37, 60–63 (HLGR), arginine 119, and arginine 152 contribute to the substrate site. ATP contacts are provided by residues lysine 202, glycine 293, glutamate 324, and 350–353 (GGDS).

Belongs to the phosphoglycerate kinase family. In terms of assembly, monomer.

It is found in the cytoplasm. The catalysed reaction is (2R)-3-phosphoglycerate + ATP = (2R)-3-phospho-glyceroyl phosphate + ADP. It functions in the pathway carbohydrate degradation; glycolysis; pyruvate from D-glyceraldehyde 3-phosphate: step 2/5. This Borreliella afzelii (strain PKo) (Borrelia afzelii) protein is Phosphoglycerate kinase.